The following is a 466-amino-acid chain: Adenosylhomocysteinase (466 aa).

T57, D132, and E192 together coordinate substrate. 193-195 contributes to the NAD(+) binding site; that stretch reads TTT. Substrate is bound by residues K222 and D226. Residues N227, 256-261, E279, N314, 335-337, and N380 each bind NAD(+); these read GYGDVG and IGH.

It belongs to the adenosylhomocysteinase family. NAD(+) is required as a cofactor.

It is found in the cytoplasm. The catalysed reaction is S-adenosyl-L-homocysteine + H2O = L-homocysteine + adenosine. The protein operates within amino-acid biosynthesis; L-homocysteine biosynthesis; L-homocysteine from S-adenosyl-L-homocysteine: step 1/1. Functionally, may play a key role in the regulation of the intracellular concentration of adenosylhomocysteine. This is Adenosylhomocysteinase from Rhizobium etli (strain CIAT 652).